A 739-amino-acid chain; its full sequence is Phosphoribosylformylglycinamidine synthase subunit PurL (739 aa).

H54 is an active-site residue. ATP contacts are provided by Y57 and K96. Residue E98 participates in Mg(2+) binding. Residues 99-102 (SHNH) and R121 contribute to the substrate site. H100 acts as the Proton acceptor in catalysis. D122 is a Mg(2+) binding site. A substrate-binding site is contributed by Q245. D273 contacts Mg(2+). A substrate-binding site is contributed by 317–319 (ESQ). ATP-binding residues include D500 and G537. Residue N538 participates in Mg(2+) binding. Residue S540 coordinates substrate.

It belongs to the FGAMS family. Monomer. Part of the FGAM synthase complex composed of 1 PurL, 1 PurQ and 2 PurS subunits.

Its subcellular location is the cytoplasm. The catalysed reaction is N(2)-formyl-N(1)-(5-phospho-beta-D-ribosyl)glycinamide + L-glutamine + ATP + H2O = 2-formamido-N(1)-(5-O-phospho-beta-D-ribosyl)acetamidine + L-glutamate + ADP + phosphate + H(+). Its pathway is purine metabolism; IMP biosynthesis via de novo pathway; 5-amino-1-(5-phospho-D-ribosyl)imidazole from N(2)-formyl-N(1)-(5-phospho-D-ribosyl)glycinamide: step 1/2. In terms of biological role, part of the phosphoribosylformylglycinamidine synthase complex involved in the purines biosynthetic pathway. Catalyzes the ATP-dependent conversion of formylglycinamide ribonucleotide (FGAR) and glutamine to yield formylglycinamidine ribonucleotide (FGAM) and glutamate. The FGAM synthase complex is composed of three subunits. PurQ produces an ammonia molecule by converting glutamine to glutamate. PurL transfers the ammonia molecule to FGAR to form FGAM in an ATP-dependent manner. PurS interacts with PurQ and PurL and is thought to assist in the transfer of the ammonia molecule from PurQ to PurL. This is Phosphoribosylformylglycinamidine synthase subunit PurL from Bacillus cereus (strain Q1).